The following is an 838-amino-acid chain: Adenylate cyclase (838 aa).

Residues 1-541 (MNYDLFSAQK…DLRLSFPVTV (541 aa)) form a catalytic region. The tract at residues 547–838 (EDLTHACEIR…VPFHSRLAMS (292 aa)) is regulatory.

This sequence belongs to the adenylyl cyclase class-1 family.

Its subcellular location is the cytoplasm. The enzyme catalyses ATP = 3',5'-cyclic AMP + diphosphate. The protein is Adenylate cyclase (cya) of Pasteurella multocida (strain Pm70).